The sequence spans 611 residues: 1,4-alpha-glucan branching enzyme GlgB (611 aa).

D302 (nucleophile) is an active-site residue. E343 (proton donor) is an active-site residue.

It belongs to the glycosyl hydrolase 13 family. GlgB subfamily. In terms of assembly, monomer.

It carries out the reaction Transfers a segment of a (1-&gt;4)-alpha-D-glucan chain to a primary hydroxy group in a similar glucan chain.. It functions in the pathway glycan biosynthesis; glycogen biosynthesis. Catalyzes the formation of the alpha-1,6-glucosidic linkages in glycogen by scission of a 1,4-alpha-linked oligosaccharide from growing alpha-1,4-glucan chains and the subsequent attachment of the oligosaccharide to the alpha-1,6 position. This Fusobacterium nucleatum subsp. nucleatum (strain ATCC 25586 / DSM 15643 / BCRC 10681 / CIP 101130 / JCM 8532 / KCTC 2640 / LMG 13131 / VPI 4355) protein is 1,4-alpha-glucan branching enzyme GlgB.